A 344-amino-acid chain; its full sequence is F17d-G fimbrial adhesin (344 aa).

An N-terminal signal peptide occupies residues 1 to 22 (MTNFYKVFLAVFILVCCNISQA). A receptor-binding lectin domain region spans residues 23-199 (AVSFIGSTEN…SLNPFTLNDT (177 aa)). A carbohydrate is bound by residues 65–66 (AN), 110–111 (DT), and 139–142 (STQG). C75 and C132 form a disulfide bridge. The fimbrillin-binding domain stretch occupies residues 200-344 (VTSCRLLTPS…GISTFTFSYQ (145 aa)). The disordered stretch occupies residues 288–308 (LKFGPDSPVKGNENQWQLSTG). Polar residues predominate over residues 299–308 (NENQWQLSTG).

It belongs to the fimbrial protein family.

The protein localises to the fimbrium. Its function is as follows. Essential fimbrial adhesion factor that mediates binding to N-acetylglucosamine-containing receptors in the host intestinal microvilli, leading to colonization of the intestinal tissue, and diarrhea or septicemia. Also confers adhesiveness to laminin and basement membranes. The chain is F17d-G fimbrial adhesin (f17dG) from Escherichia coli.